A 616-amino-acid polypeptide reads, in one-letter code: Glutamine--fructose-6-phosphate aminotransferase [isomerizing] (616 aa).

C2 serves as the catalytic Nucleophile; for GATase activity. One can recognise a Glutamine amidotransferase type-2 domain in the interval 2 to 221 (CGIVGYVGTD…QDQIVTITPE (220 aa)). 2 SIS domains span residues 288–428 (LGDE…VRGT) and 461–606 (LAHW…VDQP). The For Fru-6P isomerization activity role is filled by K611.

In terms of assembly, homodimer.

Its subcellular location is the cytoplasm. The catalysed reaction is D-fructose 6-phosphate + L-glutamine = D-glucosamine 6-phosphate + L-glutamate. Functionally, catalyzes the first step in hexosamine metabolism, converting fructose-6P into glucosamine-6P using glutamine as a nitrogen source. This chain is Glutamine--fructose-6-phosphate aminotransferase [isomerizing], found in Leifsonia xyli subsp. xyli (strain CTCB07).